The primary structure comprises 494 residues: Anaerobic nitric oxide reductase flavorubredoxin (494 aa).

The zinc metallo-hydrolase stretch occupies residues 30–210; that stretch reads TKGTSYNSYL…PFSALVTAKI (181 aa). 6 residues coordinate Fe cation: His-79, Glu-81, Asp-83, His-147, Asp-166, and His-227. The Flavodoxin-like domain maps to 254-393; sequence ITIFYDSMSN…ECREHGQQIA (140 aa). FMN-binding positions include 260-264 and 342-369; these read SMSNN and AFGS…ETAI. A Rubredoxin-like domain is found at 441–492; that stretch reads CQCMVCTVCNWVYDPAKGEPNQGIEVGTTWADVPDYFLCPECHLGKDVFVEY. Residues Cys-446, Cys-449, Cys-479, and Cys-482 each coordinate Fe cation.

The protein in the N-terminal section; belongs to the zinc metallo-hydrolase group 3 family. As to quaternary structure, homotetramer. Fe cation is required as a cofactor. The cofactor is FMN.

Its subcellular location is the cytoplasm. Its pathway is nitrogen metabolism; nitric oxide reduction. In terms of biological role, anaerobic nitric oxide reductase; uses NADH to detoxify nitric oxide (NO), protecting several 4Fe-4S NO-sensitive enzymes. Has at least 2 reductase partners, only one of which (NorW, flavorubredoxin reductase) has been identified. NO probably binds to the di-iron center; electrons enter from the NorW at rubredoxin and are transferred sequentially to the FMN center and the di-iron center. Also able to function as an aerobic oxygen reductase. In Vibrio vulnificus (strain YJ016), this protein is Anaerobic nitric oxide reductase flavorubredoxin.